Here is a 155-residue protein sequence, read N- to C-terminus: 3-hydroxyacyl-[acyl-carrier-protein] dehydratase FabZ (155 aa).

Residue H57 is part of the active site.

Belongs to the thioester dehydratase family. FabZ subfamily.

Its subcellular location is the cytoplasm. It catalyses the reaction a (3R)-hydroxyacyl-[ACP] = a (2E)-enoyl-[ACP] + H2O. Involved in unsaturated fatty acids biosynthesis. Catalyzes the dehydration of short chain beta-hydroxyacyl-ACPs and long chain saturated and unsaturated beta-hydroxyacyl-ACPs. The polypeptide is 3-hydroxyacyl-[acyl-carrier-protein] dehydratase FabZ (Cereibacter sphaeroides (strain KD131 / KCTC 12085) (Rhodobacter sphaeroides)).